The sequence spans 152 residues: Natriuretic peptides A (152 aa).

The first 24 residues, 1–24 (MGSFSITKGFFLFLAFWLPGHIGA), serve as a signal peptide directing secretion. Propeptides lie at residues 25-122 (NPVY…AGPR) and 92-102 (DGGALGRGPWD). The tract at residues 54 to 104 (DEVMPPQALSEQTDEAGAALSSLSEVPPWTGEVNPSQRDGGALGRGPWDPS) is disordered. At Ser128 the chain carries Phosphoserine. Cys129 and Cys145 are oxidised to a cystine. The important for degradation of atrial natriuretic peptide by IDE stretch occupies residues 146-150 (NSFRY).

The protein belongs to the natriuretic peptide family. As to quaternary structure, homodimer; disulfide-linked antiparallel dimer. Post-translationally, the precursor molecule is proteolytically cleaved by CORIN at Arg-122 to produce the atrial natriuretic peptide. Undergoes further proteolytic cleavage by unknown proteases to give rise to long-acting natriuretic peptide, vessel dilator and kaliuretic peptide. Additional processing gives rise to the auriculin and atriopeptin peptides. In the kidneys, alternative processing by an unknown protease results in the peptide urodilatin. Cleavage by MME initiates degradation of the factor and thereby regulates its activity. Degradation by IDE results in reduced activation of NPR1 (in vitro). During IDE degradation, the resulting products can temporarily stimulate NPR2 to produce cGMP, before the fragments are completely degraded and inactivated by IDE (in vitro). In terms of processing, degraded by IDE. Post-translationally, phosphorylation on Ser-128 decreases vasorelaxant activity. As to expression, high levels of expression in the atria compared to the ventricles. Very low levels of expression detected in extracardiac tissues such as the brain, hypothalamus, pituitary, lung and aorta. Atria (at protein level). In terms of tissue distribution, high levels of expression in the atria with very low levels of expression in the ventricles (at protein level). Relatively low levels of expression detected in the brain compared to the atria (at protein level).

The protein resides in the secreted. The protein localises to the perikaryon. It localises to the cell projection. Functionally, hormone that plays a key role in mediating cardio-renal homeostasis, and is involved in vascular remodeling and regulating energy metabolism. Acts by specifically binding and stimulating NPR1 to produce cGMP, which in turn activates effector proteins, such as PRKG1, that drive various biological responses. Regulates vasodilation, natriuresis, diuresis and aldosterone synthesis and is therefore essential for regulating blood pressure, controlling the extracellular fluid volume and maintaining the fluid-electrolyte balance. Also involved in inhibiting cardiac remodeling and cardiac hypertrophy by inducing cardiomyocyte apoptosis and attenuating the growth of cardiomyocytes and fibroblasts. Plays a role in female pregnancy by promoting trophoblast invasion and spiral artery remodeling in uterus, and thus prevents pregnancy-induced hypertension. In adipose tissue, acts in various cGMP- and PKG-dependent pathways to regulate lipid metabolism and energy homeostasis. This includes up-regulating lipid metabolism and mitochondrial oxygen utilization by activating the AMP-activated protein kinase (AMPK), and increasing energy expenditure by acting via MAPK11 to promote the UCP1-dependent thermogenesis of brown adipose tissue. Binds the clearance receptor NPR3 which removes the hormone from circulation. May have a role in cardio-renal homeostasis through regulation of natriuresis, diuresis, vasodilation, and inhibiting aldosterone synthesis. In vitro, promotes the production of cGMP and induces vasodilation. May promote natriuresis, at least in part, by enhancing prostaglandin E2 synthesis resulting in the inhibition of renal Na+-K+-ATPase. However reports on the involvement of this peptide in mammal blood volume and blood pressure homeostasis are conflicting; according to a report, in vivo it is not sufficient to activate cGMP and does not inhibit collecting duct transport nor effect diuresis and natriuresis. Appears to bind to specific receptors that are distinct from the receptors bound by atrial natriuretic peptide and vessel dilator. Possibly enhances protein excretion in urine by decreasing proximal tubular protein reabsorption. Its function is as follows. May have a role in cardio-renal homeostasis through regulation of natriuresis, diuresis, and vasodilation. In vitro, promotes the production of cGMP and induces vasodilation. May promote natriuresis, at least in part, by enhancing prostaglandin E2 synthesis resulting in the inhibition of renal Na+-K+-ATPase. However reports on the involvement of this peptide in mammal blood volume and blood pressure homeostasis are conflicting; according to a report, in vivo it is not sufficient to activate cGMP and does not inhibit collecting duct transport nor effect diuresis and natriuresis. Appears to bind to specific receptors that are distinct from the receptors bound by the atrial natriuretic and long-acting natriuretic peptides. Possibly functions in protein excretion in urine by maintaining the integrity of the proximal tubules and enhancing protein excretion by decreasing proximal tubular protein reabsorption. In terms of biological role, may have a role in cardio-renal homeostasis through regulation of diuresis and inhibiting aldosterone synthesis. In vitro, promotes the production of cGMP and induces vasodilation. May promote natriuresis, at least in part, by enhancing prostaglandin E2 synthesis resulting in the inhibition of renal Na+-K+-ATPase. May have a role in potassium excretion but not sodium excretion (natriuresis). Possibly enhances protein excretion in urine by decreasing proximal tubular protein reabsorption. Functionally, hormone produced in the kidneys that appears to be important for maintaining cardio-renal homeostasis. Mediates vasodilation, natriuresis and diuresis primarily in the renal system, in order to maintain the extracellular fluid volume and control the fluid-electrolyte balance. Specifically binds and stimulates cGMP production by renal transmembrane receptors, likely NPR1. Urodilatin not ANP, may be the natriuretic peptide responsible for the regulation of sodium and water homeostasis in the kidney. May have a role in cardio-renal homeostasis through regulation of natriuresis and vasodilation. In vivo promotes natriuresis and in vitro, vasodilates renal artery strips. Its function is as follows. May have a role in cardio-renal homeostasis through regulation of regulation of natriuresis and vasodilation. In vivo promotes natriuresis. In vitro, vasodilates intestinal smooth muscle but not smooth muscle strips. In terms of biological role, may have a role in cardio-renal homeostasis through regulation of natriuresis and vasodilation. In vivo promotes natriuresis. In vitro, selectively vasodilates intestinal and vascular smooth muscle strips. Functionally, may have a role in cardio-renal homeostasis through regulation of natriuresis and vasodilation. In vivo promotes natriuresis. In vitro, selectively vasodilates intestinal smooth muscle but not vascular smooth muscle strips. The chain is Natriuretic peptides A (Nppa) from Rattus norvegicus (Rat).